We begin with the raw amino-acid sequence, 896 residues long: Protein argonaute 9 (896 aa).

The PAZ domain maps to 267–380; it reads PVVDFLLANQ…FPIEFCNLVS (114 aa). A Piwi domain is found at 550–857; it reads FLLCILAERK…AAAQMGTVMK (308 aa).

It belongs to the argonaute family. Ago subfamily. Expressed in embryonic shoot apex region, pollen and developing ovules.

Its function is as follows. Involved in RNA-mediated post-transcriptional gene silencing (PTGS). Main component of the RNA-induced silencing complex (RISC) that binds to a short guide RNA such as a microRNA (miRNA) or small interfering RNA (siRNA). RISC uses the mature miRNA or siRNA as a guide for slicer-directed cleavage of homologous mRNAs to repress gene expression. Associates preferentially with small RNAs of 24 nucleotide in length with a 5' terminal adenosine. Interacts with 24 nucleotide sRNAs derived from transposable elements (TEs). Required to silence pericentrometric-located TEs in female gametes and their accessory cells. Necessary to inactivate a significant proportion of long terminal repeat retrotransposons (LTRs) in the ovule. Required to specify cell fate in ovule. Involved in the control of female gamete formation by restricting the specification of gametophyte precursors in a dosage-dependent, non-cell-autonomous manner. Targeted by turnip yellows virus (TuYV) protein P0 (via F-box-like domain) for probable proteasome degradation and thereby inactivating AGO9 function in RNA silencing. This is Protein argonaute 9 (AGO9) from Arabidopsis thaliana (Mouse-ear cress).